Reading from the N-terminus, the 203-residue chain is Thymidylate kinase (203 aa).

7 to 14 serves as a coordination point for ATP; the sequence is GGEGAGKT.

It belongs to the thymidylate kinase family.

The enzyme catalyses dTMP + ATP = dTDP + ADP. Functionally, phosphorylation of dTMP to form dTDP in both de novo and salvage pathways of dTTP synthesis. In Chlamydia muridarum (strain MoPn / Nigg), this protein is Thymidylate kinase (tmk).